A 293-amino-acid chain; its full sequence is Group 3 late-embryogenesis abundant protein, mitochondrial (293 aa).

Residues 1–31 (MFLARNAGRAGYRGVVAYQQAASFSVSSAKA) constitute a mitochondrion transit peptide. Low complexity predominate over residues 27–43 (SSAKAAGSRSSGGSDAG). Positions 27-52 (SSAKAAGSRSSGGSDAGDYAREAAEH) are disordered. 9 LEA 11-mer repeat repeats span residues 58-68 (KDLKNEASWKA), 83-93 (KDTVKEGVHDM), 123-133 (KNAAQDTAATL), 134-144 (KDKAGSAWNQA), 145-155 (KHVVEDKGEDV), 160-170 (KDTASKVWGKA), 171-181 (KHVAEDVKENA), 199-209 (KDKAADVLSGA), and 210-220 (KHTAENLAHKA). Residues 217 to 293 (AHKAQAAIHD…KGPGQAGGRR (77 aa)) form a disordered region. The span at 230-265 (SSGSQSQSQSQSQYRQGQQQGRQDQQQSKSQWGQTS) shows a compositional bias: low complexity. Residues 279-293 (GPQGGKGPGQAGGRR) are compositionally biased toward gly residues.

This sequence belongs to the LEA type 4 family.

The protein resides in the mitochondrion. In terms of biological role, mitochondrial heat soluble protein acting as a molecular shield in water-deficient condition. This Ramazzottius varieornatus (Water bear) protein is Group 3 late-embryogenesis abundant protein, mitochondrial.